Here is a 299-residue protein sequence, read N- to C-terminus: Mycothiol acetyltransferase (299 aa).

2 N-acetyltransferase domains span residues 1 to 156 (MGWT…TYRG) and 149 to 299 (VTMR…ARAL). E33 contributes to the 1D-myo-inositol 2-(L-cysteinylamino)-2-deoxy-alpha-D-glucopyranoside binding site. Residues 75 to 77 (LVV) and 83 to 88 (RRGIGT) contribute to the acetyl-CoA site. 1D-myo-inositol 2-(L-cysteinylamino)-2-deoxy-alpha-D-glucopyranoside-binding residues include E176, K218, and E231. Acetyl-CoA is bound by residues 235 to 237 (VGI) and 242 to 248 (QGRGLGR). Y269 lines the 1D-myo-inositol 2-(L-cysteinylamino)-2-deoxy-alpha-D-glucopyranoside pocket. 274-279 (NTAALH) lines the acetyl-CoA pocket.

Belongs to the acetyltransferase family. MshD subfamily. As to quaternary structure, monomer.

It carries out the reaction 1D-myo-inositol 2-(L-cysteinylamino)-2-deoxy-alpha-D-glucopyranoside + acetyl-CoA = mycothiol + CoA + H(+). Functionally, catalyzes the transfer of acetyl from acetyl-CoA to desacetylmycothiol (Cys-GlcN-Ins) to form mycothiol. The protein is Mycothiol acetyltransferase of Rhodococcus erythropolis (strain PR4 / NBRC 100887).